The chain runs to 108 residues: uncharacterized protein (108 aa).

It belongs to the baculoviridae 11 kDa protein family.

This is an uncharacterized protein from Orgyia pseudotsugata (Douglas-fir tussock moth).